Consider the following 537-residue polypeptide: Eukaryotic translation initiation factor 3 subunit L (537 aa).

The 213-residue stretch at 301 to 513 (TFSSILLYIQ…IHIADTKVSH (213 aa)) folds into the PCI domain.

It belongs to the eIF-3 subunit L family. Component of the eukaryotic translation initiation factor 3 (eIF-3) complex.

Its subcellular location is the cytoplasm. Its function is as follows. Component of the eukaryotic translation initiation factor 3 (eIF-3) complex, which is involved in protein synthesis of a specialized repertoire of mRNAs and, together with other initiation factors, stimulates binding of mRNA and methionyl-tRNAi to the 40S ribosome. The eIF-3 complex specifically targets and initiates translation of a subset of mRNAs involved in cell proliferation. The chain is Eukaryotic translation initiation factor 3 subunit L from Aedes aegypti (Yellowfever mosquito).